The primary structure comprises 236 residues: Phycocyanobilin:ferredoxin oxidoreductase (236 aa).

This sequence belongs to the HY2 family.

It carries out the reaction (2R,3Z)-phycocyanobilin + 4 oxidized [2Fe-2S]-[ferredoxin] = biliverdin IXalpha + 4 reduced [2Fe-2S]-[ferredoxin] + 4 H(+). Its function is as follows. Catalyzes the four-electron reduction of biliverdin IX-alpha (2-electron reduction at both the A and D rings); the reaction proceeds via an isolatable 2-electron intermediate, 181,182-dihydrobiliverdin. The protein is Phycocyanobilin:ferredoxin oxidoreductase (pcyA) of Thermosynechococcus vestitus (strain NIES-2133 / IAM M-273 / BP-1).